A 102-amino-acid chain; its full sequence is uncharacterized protein (102 aa).

Belongs to the Gram-positive plasmids replication protein type 2 family.

This is an uncharacterized protein from Staphylococcus aureus.